A 214-amino-acid polypeptide reads, in one-letter code: Probable transaldolase (214 aa).

The active-site Schiff-base intermediate with substrate is the K83.

This sequence belongs to the transaldolase family. Type 3B subfamily.

It is found in the cytoplasm. It carries out the reaction D-sedoheptulose 7-phosphate + D-glyceraldehyde 3-phosphate = D-erythrose 4-phosphate + beta-D-fructose 6-phosphate. It functions in the pathway carbohydrate degradation; pentose phosphate pathway; D-glyceraldehyde 3-phosphate and beta-D-fructose 6-phosphate from D-ribose 5-phosphate and D-xylulose 5-phosphate (non-oxidative stage): step 2/3. Functionally, transaldolase is important for the balance of metabolites in the pentose-phosphate pathway. The protein is Probable transaldolase of Leptospira interrogans serogroup Icterohaemorrhagiae serovar copenhageni (strain Fiocruz L1-130).